Reading from the N-terminus, the 108-residue chain is Latartoxin-2c (108 aa).

Residues 1-19 (MKVLVITALCFILLQNVLG) form the signal peptide. A propeptide spans 20–42 (EDTYEDLQNYIENLINENQDEAR) (removed in mature form). Residues 39–42 (DEAR) carry the Processing quadruplet motif motif. Disulfide bonds link cysteine 44–cysteine 61, cysteine 51–cysteine 72, cysteine 60–cysteine 84, and cysteine 74–cysteine 82. The residue at position 107 (isoleucine 107) is an Isoleucine amide.

This sequence belongs to the neurotoxin 19 (CSTX) family. 11 (latartoxin) subfamily. Post-translationally, contains 4 disulfide bonds. In terms of processing, cleavage of the propeptide depends on the processing quadruplet motif (XXXR, with at least one of X being E). Expressed by the venom gland.

It localises to the secreted. Insect toxin. In Lachesana tarabaevi (Spider), this protein is Latartoxin-2c.